Here is a 324-residue protein sequence, read N- to C-terminus: MRSMSLWMLIGPVTGIATWASLRYAATTTTSSTAAASTRMGLAPVIALSHGGGPLPLLGDPGHKSIIHSLSHRIPKILSLNDPDRRPRAIILITAHWSTAAPTISGAANPDLIYDYYGFPPETYELKYPARGDPGIAAEAAAAFRAEGLGDVVVDPGRGWDHGVFVPMTLVRPEADIPIVQMSVLASEDPTSHLRMGRALRALRAENIAIVGSGFASFHNLRAMMAMRSSAGSRNPEGARIQAISREWNSALTDVVDKNPWQGLEGWRSLPGADLMHPPRGGEHFMPLIACAGAAHEEEKVRWYTDEYLGVDIYTYYWGGSDVE.

An N-terminal signal peptide occupies residues 1-25 (MRSMSLWMLIGPVTGIATWASLRYA). 3 residues coordinate Zn(2+): His50, His96, and His284.

It belongs to the DODA-type extradiol aromatic ring-opening dioxygenase family. Monomer. It depends on Zn(2+) as a cofactor.

Functionally, dioxygenase; part of the gene cluster that mediates the biosynthesis of the tetramic acids Sch210971 and Sch210972, potential anti-HIV fungal natural product that contain a decalin core. The PKS module of tasS together with the enoylreductase tasC catalyze the formation of the polyketide unit which is then conjugated to 4-hydroxyl-4-methyl glutamate (HMG) by the condensation domain of the tasS NRPS module. One unique structural feature of Sch210971 and Sch210972 is the tetramic acid motif proposed to be derived from the non-proteinogenic amino acid HMG, by a Dieckmann-type condensation catalyzed by the reductase domain of tasS. The aldolase tasA catalyzes the aldol condensation of 2 molecules of pyruvic acid to yield the intermediate 4-hydroxyl-4-methyl-2-oxoglutarate (HMOG), which can then be stereoselectively transaminated, may be by tasG, to form HMG. The Diels-Alderase tas3 then uses the Dieckmann product of tasS as substrate and catalyzes the Diels-Alder cycloaddition to form the decalin ring of Sch210971 and Sch210972. The chain is Dioxygenase tasH from Hapsidospora irregularis.